Reading from the N-terminus, the 486-residue chain is Betaine aldehyde dehydrogenase (486 aa).

Residues Thr23 and Asp90 each contribute to the K(+) site. 147–149 provides a ligand contact to NAD(+); the sequence is GAW. Lys159 (charge relay system) is an active-site residue. NAD(+) is bound by residues 173–176 and 226–229; these read KPSE and ESGT. Leu241 serves as a coordination point for K(+). Residue Glu247 is the Proton acceptor of the active site. NAD(+) is bound by residues Gly249, Cys281, and Glu382. Cys281 serves as the catalytic Nucleophile. Cys281 is modified (cysteine sulfenic acid (-SOH)). Residues Lys452 and Gly455 each contribute to the K(+) site. Glu459 acts as the Charge relay system in catalysis.

Belongs to the aldehyde dehydrogenase family. Dimer of dimers. It depends on K(+) as a cofactor.

It carries out the reaction betaine aldehyde + NAD(+) + H2O = glycine betaine + NADH + 2 H(+). Its pathway is amine and polyamine biosynthesis; betaine biosynthesis via choline pathway; betaine from betaine aldehyde: step 1/1. Functionally, involved in the biosynthesis of the osmoprotectant glycine betaine. Catalyzes the irreversible oxidation of betaine aldehyde to the corresponding acid. In Vibrio parahaemolyticus serotype O3:K6 (strain RIMD 2210633), this protein is Betaine aldehyde dehydrogenase.